Reading from the N-terminus, the 366-residue chain is N-acetyl-6-hydroxytryptophan oxidase ivoB (366 aa).

A signal peptide spans 1–18 (MHLLSSLAALAAAITVAF). N-linked (GlcNAc...) asparagine glycosylation is found at N28 and N81. Cu cation contacts are provided by H87 and H96. 2 N-linked (GlcNAc...) asparagine glycosylation sites follow: N114 and N121. H291 is a binding site for Cu cation. An N-linked (GlcNAc...) asparagine glycan is attached at N319.

It belongs to the tyrosinase family. Cu(2+) serves as cofactor.

The protein operates within pigment biosynthesis. With respect to regulation, activity is inhibited by 2,3-dihydroxynaphthalene, phenylhydrazine, diethyl dithiocarbamate and 8-hydroxyquinolene. Its function is as follows. Nonribosomal peptide synthetase; part of the pathway that mediates the biosynthesis of the gray-brown conidiophore pigment. The first step of the pathway is performed by the nonribosomal peptide synthetase ivoA that catalyzes ATP-dependent unidirectional stereoinversion of L-tryptophan to D-tryptophan with complete conversion. While the stereoinversion is catalyzed by the epimerization (E) domain of ivoA, the terminal condensation (C) domain stereoselectively hydrolyzes D-tryptophanyl-S-phosphopantetheine thioester and thus represents a non-canonical C domain function. D-tryptophan is acetylated, probably by an endogenous acetyltransferase. N-acetyltryptophan is further 6-hydroxylated into N-acetyl-6-hydroxytryptophan (AHT) by the cytochrome P450 monooxygenase ivoC. N-acetyl-6-hydroxytryptophan is substrate of the N-acetyl-6-hydroxytryptophan oxidase ivoB to produce the gray-brown conidiophore pigment. The polypeptide is N-acetyl-6-hydroxytryptophan oxidase ivoB (Emericella nidulans (strain FGSC A4 / ATCC 38163 / CBS 112.46 / NRRL 194 / M139) (Aspergillus nidulans)).